The primary structure comprises 396 residues: Putative N(4)-(beta-N-acetylglucosaminyl)-L-asparaginase GG24090 (396 aa).

The N-terminal stretch at 1–23 (MKRHLGTCLWVLCLASTAFSSLA) is a signal peptide. 2 cysteine pairs are disulfide-bonded: C100/C105 and C199/C215. T246 functions as the Nucleophile in the catalytic mechanism. Substrate-binding positions include 274–277 (RVGD) and 297–300 (TGDG). C357 and C384 are joined by a disulfide.

It belongs to the Ntn-hydrolase family. As to quaternary structure, heterotetramer of two alpha and two beta chains arranged as a dimer of alpha/beta heterodimers. Cleaved into an alpha and beta chain by autocatalysis; this activates the enzyme. The N-terminal residue of the beta subunit is responsible for the nucleophile hydrolase activity.

The enzyme catalyses N(4)-(beta-N-acetyl-D-glucosaminyl)-L-asparagine + H2O = N-acetyl-beta-D-glucosaminylamine + L-aspartate + H(+). Its function is as follows. Cleaves the GlcNAc-Asn bond which joins oligosaccharides to the peptide of asparagine-linked glycoproteins. This chain is Putative N(4)-(beta-N-acetylglucosaminyl)-L-asparaginase GG24090, found in Drosophila erecta (Fruit fly).